Reading from the N-terminus, the 150-residue chain is Troponin C, isoform 1 (150 aa).

At methionine 1 the chain carries N-acetylmethionine. 4 consecutive EF-hand domains span residues 7 to 42, 43 to 78, 83 to 118, and 119 to 150; these read DQVQ…MGVK, ISDR…FLSE, ALKK…LDNK, and LTED…MMNG. Positions 56, 58, 60, 62, and 67 each coordinate Ca(2+). Ca(2+)-binding residues include aspartate 132, aspartate 134, serine 136, threonine 138, and glutamate 143.

The protein belongs to the troponin C family.

Functionally, troponin is the central regulatory protein of striated muscle contraction. Tn consists of three components: Tn-I which is the inhibitor of actomyosin ATPase, Tn-T which contains the binding site for tropomyosin and Tn-C. The binding of calcium to Tn-C abolishes the inhibitory action of Tn on actin filaments. The chain is Troponin C, isoform 1 from Homarus americanus (American lobster).